A 570-amino-acid polypeptide reads, in one-letter code: Probable D-xylulose kinase A (570 aa).

Substrate is bound by residues His-98, Asp-279, and Asn-280. Residues Trp-363, Gly-470–Gly-471, and Asn-474 each bind ATP.

The protein belongs to the FGGY kinase family.

It localises to the cytoplasm. It carries out the reaction D-xylulose + ATP = D-xylulose 5-phosphate + ADP + H(+). Functionally, highly specific D-xylulose kinase which participates in the catabolism of xylose. Xylose is a major component of hemicelluloses such as xylan. Most fungi utilize D-xylose via three enzymatic reactions, xylose reductase (XR), xylitol dehydrogenase (XDH), and xylulokinase, to form xylulose 5-phosphate, which enters pentose phosphate pathway. The protein is Probable D-xylulose kinase A (xkiA) of Arthroderma otae (strain ATCC MYA-4605 / CBS 113480) (Microsporum canis).